The primary structure comprises 304 residues: UDP-3-O-acyl-N-acetylglucosamine deacetylase (304 aa).

3 residues coordinate Zn(2+): histidine 78, histidine 237, and aspartate 241. The active-site Proton donor is the histidine 264.

The protein belongs to the LpxC family. Zn(2+) serves as cofactor.

It carries out the reaction a UDP-3-O-[(3R)-3-hydroxyacyl]-N-acetyl-alpha-D-glucosamine + H2O = a UDP-3-O-[(3R)-3-hydroxyacyl]-alpha-D-glucosamine + acetate. It functions in the pathway glycolipid biosynthesis; lipid IV(A) biosynthesis; lipid IV(A) from (3R)-3-hydroxytetradecanoyl-[acyl-carrier-protein] and UDP-N-acetyl-alpha-D-glucosamine: step 2/6. In terms of biological role, catalyzes the hydrolysis of UDP-3-O-myristoyl-N-acetylglucosamine to form UDP-3-O-myristoylglucosamine and acetate, the committed step in lipid A biosynthesis. The polypeptide is UDP-3-O-acyl-N-acetylglucosamine deacetylase (Acidithiobacillus ferrooxidans (strain ATCC 53993 / BNL-5-31) (Leptospirillum ferrooxidans (ATCC 53993))).